A 607-amino-acid chain; its full sequence is Elongation factor 4 (607 aa).

In terms of domain architecture, tr-type G spans 11 to 193; sequence KNIRNFSIIA…KIVETIPAPS (183 aa). GTP contacts are provided by residues 23–28 and 140–143; these read DHGKST and NKID.

This sequence belongs to the TRAFAC class translation factor GTPase superfamily. Classic translation factor GTPase family. LepA subfamily.

The protein localises to the cell membrane. The enzyme catalyses GTP + H2O = GDP + phosphate + H(+). Required for accurate and efficient protein synthesis under certain stress conditions. May act as a fidelity factor of the translation reaction, by catalyzing a one-codon backward translocation of tRNAs on improperly translocated ribosomes. Back-translocation proceeds from a post-translocation (POST) complex to a pre-translocation (PRE) complex, thus giving elongation factor G a second chance to translocate the tRNAs correctly. Binds to ribosomes in a GTP-dependent manner. This Staphylococcus carnosus (strain TM300) protein is Elongation factor 4.